The primary structure comprises 130 residues: Small ribosomal subunit protein uS9 (130 aa).

It belongs to the universal ribosomal protein uS9 family.

The chain is Small ribosomal subunit protein uS9 from Halalkalibacterium halodurans (strain ATCC BAA-125 / DSM 18197 / FERM 7344 / JCM 9153 / C-125) (Bacillus halodurans).